A 616-amino-acid chain; its full sequence is MQAALIGLNFPLQRRFLSGVLTTTSSAKRCYSGDTGKPYDCTSAEHKKELEECYNRLDLSFENTKEAFKSKSNTELVRALVVLRLCGIQTLVNQNQIILNTMRRVLGKNLFKKTLKNTFFGHFVAGETEEEVRHVVEKLRNYGVKSILDYSVEADITSQEATDKTVKGTSVATVKPAAMTPVVDAKTLETTRERYTVHEEFGDRRQGVSSARTYFYEGEEQCDKNRDIFKDSINAVASATKNEGFVAVKITALGRPQLLLKLSEAIVQTQNFFKALTGGMSLQEGRLTSQEFYKRLGELGVKTDTESVKKFFDEVDFDSDGIVDLHGWNHILDDHVKLGQLFQVLNIKTGSLEPLIQNLSNEEEQEFRNMVRRTLDVAEYAIEKGVRIMVDAEQTYLQPAISKITIEMMKKYNKGRGNIFNTYQAYLKGTLQNMEADMQVARREGWHFGAKLVRGAYMEQERARAKAIGYEDPINDNFEATSKMYESCLTRIADEVHRRGKTNVSVMVASHNEDTVRFALNLMKEKCISPSERVMCMAQLYGMCDQVSFSLGQAGFSVYKYLPYGPVEEVLPYLSRRALENGSVLKKANKERDLLWKELKRRISSGEFKARSSSSS.

The protein belongs to the proline oxidase family. Requires FAD as cofactor.

Its subcellular location is the mitochondrion matrix. The catalysed reaction is L-proline + a quinone = (S)-1-pyrroline-5-carboxylate + a quinol + H(+). It participates in amino-acid degradation; L-proline degradation into L-glutamate; L-glutamate from L-proline: step 1/2. Functionally, converts proline to delta-1-pyrroline-5-carboxylate. Through proline catabolism, promotes reactive oxygen species (ROS) production and the transcription of skn-1 target genes in response to bacterial infection by P.aeruginosa. This Caenorhabditis elegans protein is Proline dehydrogenase 1, mitochondrial.